We begin with the raw amino-acid sequence, 200 residues long: Probable nicotinate-nucleotide adenylyltransferase (200 aa).

It belongs to the NadD family.

The enzyme catalyses nicotinate beta-D-ribonucleotide + ATP + H(+) = deamido-NAD(+) + diphosphate. It participates in cofactor biosynthesis; NAD(+) biosynthesis; deamido-NAD(+) from nicotinate D-ribonucleotide: step 1/1. Its function is as follows. Catalyzes the reversible adenylation of nicotinate mononucleotide (NaMN) to nicotinic acid adenine dinucleotide (NaAD). The chain is Probable nicotinate-nucleotide adenylyltransferase from Leifsonia xyli subsp. xyli (strain CTCB07).